The sequence spans 266 residues: Undecaprenyl-diphosphatase (266 aa).

A run of 8 helical transmembrane segments spans residues 4 to 24 (ILSA…PISS), 39 to 59 (LSII…IIYY), 86 to 106 (LKLI…GTFI), 112 to 132 (MFTL…ILML), 145 to 165 (ILLA…PGIS), 182 to 202 (KSAF…AILL), 210 to 230 (IFMV…FVVG), and 246 to 266 (LYYF…FVRI).

The protein belongs to the UppP family.

The protein localises to the cell inner membrane. It catalyses the reaction di-trans,octa-cis-undecaprenyl diphosphate + H2O = di-trans,octa-cis-undecaprenyl phosphate + phosphate + H(+). Catalyzes the dephosphorylation of undecaprenyl diphosphate (UPP). Confers resistance to bacitracin. This Borreliella burgdorferi (strain ATCC 35210 / DSM 4680 / CIP 102532 / B31) (Borrelia burgdorferi) protein is Undecaprenyl-diphosphatase.